Here is a 374-residue protein sequence, read N- to C-terminus: Chaperone protein DnaJ (374 aa).

The 66-residue stretch at Asp5–Gly70 folds into the J domain. The CR-type zinc-finger motif lies at Gly133–Thr210. Zn(2+) is bound by residues Cys146, Cys149, Cys162, Cys165, Cys184, Cys187, Cys198, and Cys201. 4 CXXCXGXG motif repeats span residues Cys146 to Gly153, Cys162 to Gly169, Cys184 to Gly191, and Cys198 to Gly205.

The protein belongs to the DnaJ family. As to quaternary structure, homodimer. Zn(2+) is required as a cofactor.

Its subcellular location is the cytoplasm. Participates actively in the response to hyperosmotic and heat shock by preventing the aggregation of stress-denatured proteins and by disaggregating proteins, also in an autonomous, DnaK-independent fashion. Unfolded proteins bind initially to DnaJ; upon interaction with the DnaJ-bound protein, DnaK hydrolyzes its bound ATP, resulting in the formation of a stable complex. GrpE releases ADP from DnaK; ATP binding to DnaK triggers the release of the substrate protein, thus completing the reaction cycle. Several rounds of ATP-dependent interactions between DnaJ, DnaK and GrpE are required for fully efficient folding. Also involved, together with DnaK and GrpE, in the DNA replication of plasmids through activation of initiation proteins. The protein is Chaperone protein DnaJ of Coxiella burnetii (strain CbuG_Q212) (Coxiella burnetii (strain Q212)).